The chain runs to 446 residues: Phosphoglucosamine mutase (446 aa).

Residue S103 is the Phosphoserine intermediate of the active site. Mg(2+) is bound by residues S103, D242, D244, and D246. Phosphoserine is present on S103.

Belongs to the phosphohexose mutase family. The cofactor is Mg(2+). Activated by phosphorylation.

It carries out the reaction alpha-D-glucosamine 1-phosphate = D-glucosamine 6-phosphate. In terms of biological role, catalyzes the conversion of glucosamine-6-phosphate to glucosamine-1-phosphate. This is Phosphoglucosamine mutase from Corynebacterium urealyticum (strain ATCC 43042 / DSM 7109).